The following is a 243-amino-acid chain: Uridylate kinase (243 aa).

14 to 17 (KLSG) serves as a coordination point for ATP. Gly-57 contributes to the UMP binding site. 2 residues coordinate ATP: Gly-58 and Arg-62. Residues Asp-77 and 139–146 (TGRPYFTT) each bind UMP. ATP is bound by residues Asn-167, Tyr-173, and Asp-176.

This sequence belongs to the UMP kinase family. Homohexamer.

It localises to the cytoplasm. The catalysed reaction is UMP + ATP = UDP + ADP. Its pathway is pyrimidine metabolism; CTP biosynthesis via de novo pathway; UDP from UMP (UMPK route): step 1/1. With respect to regulation, inhibited by UTP. Its function is as follows. Catalyzes the reversible phosphorylation of UMP to UDP. The sequence is that of Uridylate kinase from Mycoplasmopsis pulmonis (strain UAB CTIP) (Mycoplasma pulmonis).